We begin with the raw amino-acid sequence, 63 residues long: Jingdongin-1-MT1 (63 aa).

Positions methionine 1–cysteine 22 are cleaved as a signal peptide. A propeptide spans glutamate 23–glutamate 44 (removed in mature form). Cysteine 57 and cysteine 63 are joined by a disulfide.

This sequence belongs to the frog skin active peptide (FSAP) family. Brevinin subfamily. As to expression, expressed by the skin glands.

Its subcellular location is the secreted. Its function is as follows. Antimicrobial peptide. Active against some Gram-negative and a variety of Gram-positive bacterial strains. Active against fungus C.glabrata 090902 but not against C.neoformans 201211. Shows hemolytic activity against human erythrocytes. This chain is Jingdongin-1-MT1, found in Amolops mantzorum (Sichuan torrent frog).